The sequence spans 194 residues: ATP-dependent Clp protease proteolytic subunit 4 (194 aa).

Residue serine 100 is the Nucleophile of the active site. Histidine 125 is a catalytic residue.

This sequence belongs to the peptidase S14 family. Fourteen ClpP subunits assemble into 2 heptameric rings which stack back to back to give a disk-like structure with a central cavity, resembling the structure of eukaryotic proteasomes.

It localises to the cytoplasm. It carries out the reaction Hydrolysis of proteins to small peptides in the presence of ATP and magnesium. alpha-casein is the usual test substrate. In the absence of ATP, only oligopeptides shorter than five residues are hydrolyzed (such as succinyl-Leu-Tyr-|-NHMec, and Leu-Tyr-Leu-|-Tyr-Trp, in which cleavage of the -Tyr-|-Leu- and -Tyr-|-Trp bonds also occurs).. Functionally, cleaves peptides in various proteins in a process that requires ATP hydrolysis. Has a chymotrypsin-like activity. Plays a major role in the degradation of misfolded proteins. This Rhodococcus jostii (strain RHA1) protein is ATP-dependent Clp protease proteolytic subunit 4.